Reading from the N-terminus, the 427-residue chain is Tol-Pal system protein TolB (427 aa).

The N-terminal stretch at 1–23 (MKLLKRLVSVFAIVLAVGSNAFA) is a signal peptide.

Belongs to the TolB family. In terms of assembly, the Tol-Pal system is composed of five core proteins: the inner membrane proteins TolA, TolQ and TolR, the periplasmic protein TolB and the outer membrane protein Pal. They form a network linking the inner and outer membranes and the peptidoglycan layer.

It localises to the periplasm. In terms of biological role, part of the Tol-Pal system, which plays a role in outer membrane invagination during cell division and is important for maintaining outer membrane integrity. In Haemophilus influenzae (strain PittEE), this protein is Tol-Pal system protein TolB.